The following is a 341-amino-acid chain: MKITYKSAGVDVDEGQRAVQLMKNHVKSTFNSNVLADIGGFGGLFSLNIKDYKEPVLVAGTDGVGTKLKIAFMMDKHDTIGQDCVAMCVNDILCQGGKPLFFLDYVATGKLVGEKIAQIVGGIAEGCRKAGSALIGGETAEMPGLYAENEYDLAGFAVGIVDREQIITGANIKAGDIILGLPSNGIHSNGYSLVRKLFFEVLDMKITDYVEEFGTTLGEELLKPTKIYVKEILSLIEAIPVKGISHITGGGFFENIPRILPENVDAKINVDAWQIPPIFKFMAEKGNMSKDDIFGTFNMGIGMVVVVSKEDVNGAIAVLNKAGQEAHIIGEVVEGAKQVIL.

Belongs to the AIR synthase family.

The protein localises to the cytoplasm. It carries out the reaction 2-formamido-N(1)-(5-O-phospho-beta-D-ribosyl)acetamidine + ATP = 5-amino-1-(5-phospho-beta-D-ribosyl)imidazole + ADP + phosphate + H(+). Its pathway is purine metabolism; IMP biosynthesis via de novo pathway; 5-amino-1-(5-phospho-D-ribosyl)imidazole from N(2)-formyl-N(1)-(5-phospho-D-ribosyl)glycinamide: step 2/2. The polypeptide is Phosphoribosylformylglycinamidine cyclo-ligase (Alkaliphilus oremlandii (strain OhILAs) (Clostridium oremlandii (strain OhILAs))).